Here is a 257-residue protein sequence, read N- to C-terminus: Pyrroline-5-carboxylate reductase (257 aa).

This sequence belongs to the pyrroline-5-carboxylate reductase family.

Its subcellular location is the cytoplasm. It catalyses the reaction L-proline + NADP(+) = (S)-1-pyrroline-5-carboxylate + NADPH + 2 H(+). It carries out the reaction L-proline + NAD(+) = (S)-1-pyrroline-5-carboxylate + NADH + 2 H(+). Its pathway is amino-acid biosynthesis; L-proline biosynthesis; L-proline from L-glutamate 5-semialdehyde: step 1/1. Catalyzes the reduction of 1-pyrroline-5-carboxylate (PCA) to L-proline. This Helicobacter pylori (strain J99 / ATCC 700824) (Campylobacter pylori J99) protein is Pyrroline-5-carboxylate reductase.